The primary structure comprises 875 residues: MSKSTAEIRQAFLDFFHSKGHQVVASSSLVPDNDPTLLFTNAGMNQFKDVFLGLDKRAYSRATTSQRCVRAGGKHNDLENVGYTARHHTFFEMLGNFSFGDYFKHDAISYAWELLTGENWFNLPKERLWVTVYETDDEAFDIWQQQIGVPAERIIRIGDNKGGAFASDNFWQMGDTGPCGPCTEIFYDHGDHIWGGPPGSPEEDGDRYIEIWNLVFMQFNRQSDGTMLPLPKPSVDTGMGLERIAAVLQHVNSNYEIDLFSKLIAAVAKVTGATDLDNKSLRVIADHIRSCAFLVSDGVTPSNEGRGYVLRRIIRRAVRHGNMLGAKDTFFYKLVAPLIEVMGPAADELKRQQSLVEQVLKTEEDQFARTLERGLTLLDEELANLQGDTLDGETAFRLYDTYGFPVDLTADVCRERGLKVDEAGFEQAMEAQRRRARESSGFGADYNSMIRVDGASQFSGYDHEQQQSTVTALFRDGQPVNEIHAGEEAVVVLDETPFYGESGGQVGDKGVLKAANADFEVSDTQKYGQAIGHQGKLSHGSLKVNDRVDAKIDTVRRNRIRLNHSATHLLHAALRQTLGEHVAQKGSLVNDKYLRFDFSHFEAMKPEQIRTVEDLVNQQIRRNLPVQTEVMALDDAKGKGAMALFGEKYDDNVRVLTMGDFSTELCGGTHASRTGDIGLFRILSESGTAAGIRRIEAVTGDGAIATLHQQNDLLQDVAHLVKGDSNNLTDKVRAVLDRTRALEKELQQLKDQQAAQESASLSSKAKMVNGVQLLVSQLDNVEAKMLRTMVDDLKNQLGSAIIVLATTADDKVSLIAGVTKDLTDRVKAGELIGNVAQQVGGKGGGRPDMAQAGGTDVSALPAALDSVEAWVASKL.

Positions 564, 568, 666, and 670 each coordinate Zn(2+).

This sequence belongs to the class-II aminoacyl-tRNA synthetase family. Homotetramer. Requires Zn(2+) as cofactor.

The protein resides in the cytoplasm. It catalyses the reaction tRNA(Ala) + L-alanine + ATP = L-alanyl-tRNA(Ala) + AMP + diphosphate. Catalyzes the attachment of alanine to tRNA(Ala) in a two-step reaction: alanine is first activated by ATP to form Ala-AMP and then transferred to the acceptor end of tRNA(Ala). Also edits incorrectly charged Ser-tRNA(Ala) and Gly-tRNA(Ala) via its editing domain. This chain is Alanine--tRNA ligase, found in Serratia proteamaculans (strain 568).